The primary structure comprises 455 residues: Ammonium transporter Rh type B (455 aa).

Topologically, residues 1–10 (MARIPRHRRL) are cytoplasmic. A helical membrane pass occupies residues 11-31 (VLPLLCLLFQGATSLLFAIFV). Topologically, residues 32–58 (RYNHETDAALWHWGNHSNVDNEFYFRY) are extracellular. Asn-46 is a glycosylation site (N-linked (GlcNAc...) asparagine). A helical membrane pass occupies residues 59 to 79 (PSFQDVHVMVFVGFGFLMVFL). Residues 80-83 (QRYG) lie on the Cytoplasmic side of the membrane. The chain crosses the membrane as a helical span at residues 84 to 104 (FSSVGFTFLVATFTLQWATLL). The Extracellular portion of the chain corresponds to 105-121 (QGFLHSFHGGHIHIGVE). A helical membrane pass occupies residues 122–142 (SLINADFCAGAVLISFGAVLG). Topologically, residues 143–148 (KTGPAQ) are cytoplasmic. The helical transmembrane segment at 149-169 (LLLMALLEAVLFSVNEFILLS) threads the bilayer. The Extracellular segment spans residues 170-176 (LLGVRDA). Residues 177–197 (GGSMTIHTFGAYFGLFLSRVL) form a helical membrane-spanning segment. At 198 to 216 (YRSQLEKSRHRQTSVYNSD) the chain is on the cytoplasmic side. The chain crosses the membrane as a helical span at residues 217–237 (LFAMIGTIFLWVFWPSFNSAP). Residues 238-247 (TALGDGQHRT) lie on the Extracellular side of the membrane. Residues 248–270 (VVNTYYSLTASTLSTFALSALVS) traverse the membrane as a helical segment. Residues 271–274 (GDGR) lie on the Cytoplasmic side of the membrane. A helical membrane pass occupies residues 275 to 295 (LDMVHIQNAALAGGVVVGTAS). Glu-296 is a topological domain (extracellular). The chain crosses the membrane as a helical span at residues 297–317 (MMLTPFGALAAGFLAGTVSTL). The Cytoplasmic segment spans residues 318–340 (GYKFFTPILESRFKLQDTCGVHN). Residues 341–361 (LHGMPGLLGAILGVLVAALAT) form a helical membrane-spanning segment. At 362–390 (HEAYGDGLQTVFPLIAKGQRSATSQAMYQ) the chain is on the extracellular side. The chain crosses the membrane as a helical span at residues 391-411 (LFGMFVTLVFASVGGSLGGLL). Residues 412 to 455 (LKLPFLDSPPDSQCFEDQVYWEVPGEQEAETQRPLRTEEPDTQA) lie on the Cytoplasmic side of the membrane. Residues 413 to 421 (KLPFLDSPP) are interaction with ANK3.

This sequence belongs to the ammonium transporter (TC 2.A.49) family. Rh subfamily. In terms of assembly, interacts (via C-terminus) with ANK2 and ANK3; required for targeting to the basolateral membrane. N-glycosylated. In terms of tissue distribution, expressed in kidney by connecting segments and collecting tubules (at protein level).

The protein resides in the basolateral cell membrane. The protein localises to the cytoplasmic vesicle membrane. It carries out the reaction NH4(+)(in) = NH4(+)(out). The catalysed reaction is methylamine(out) = methylamine(in). The enzyme catalyses CO2(out) = CO2(in). In terms of biological role, ammonium transporter involved in the maintenance of acid-base homeostasis. Transports ammonium and its related derivative methylammonium across the basolateral plasma membrane of epithelial cells likely contributing to renal transepithelial ammonia transport and ammonia metabolism. May transport either NH4(+) or NH3 ammonia species predominantly mediating an electrogenic NH4(+) transport. May act as a CO2 channel providing for renal acid secretion. In Rattus norvegicus (Rat), this protein is Ammonium transporter Rh type B (Rhbg).